Consider the following 380-residue polypeptide: Glucose ABC transporter permease protein TsgB13 (380 aa).

10 consecutive transmembrane segments (helical) span residues 20–40 (GTPVLTVLAALAVGGVALVAL), 59–81 (QFGLTEVLVRAVPLILAGLAVYL), 94–114 (GQLLLGALAGTWVAVNVSLPA), 115–135 (VALLPLMFLAACVAGAFWAGI), 148–166 (IITSLLLTFVAQELQSYLL), 202–222 (IPLFADVHAGLLVAVAAVVAT), 255–275 (VYLFVFLLGGAFAALGGIAEI), 282–301 (FRAAFAPGYGFTAIPIALLG), 305–325 (AVKVTLAGLFFAVLFVGGSSV), and 328–348 (AFGVPAALVEIIQALVILFLI).

It belongs to the binding-protein-dependent transport system permease family. As to quaternary structure, the complex is composed of two ATP-binding proteins (TsgD13), two transmembrane proteins (TsgB13 and TsgC13) and a solute-binding protein (TsgA13).

Its subcellular location is the cell membrane. Part of an ABC transporter complex involved in glucose import. Responsible for the translocation of the substrate across the membrane. The protein is Glucose ABC transporter permease protein TsgB13 (tsgB13) of Haloferax volcanii (strain ATCC 29605 / DSM 3757 / JCM 8879 / NBRC 14742 / NCIMB 2012 / VKM B-1768 / DS2) (Halobacterium volcanii).